The chain runs to 726 residues: A-type inclusion protein A25 homolog (726 aa).

The disordered stretch occupies residues 342 to 361 (TNTGIEEPHATGGDKEDQPI). A compositionally biased stretch (basic and acidic residues) spans 347–360 (EEPHATGGDKEDQP). 4 repeat units span residues 612 to 634 (RELEEERRRVKDLESRLDECTRN), 639 to 661 (QEVDALRSRIRELENKLTDCIES), 667 to 689 (TEISRLQSRISDLERQLNECRGN), and 691 to 713 (TEISRLESRISDLERQLNDCRRN). Residues 612 to 713 (RELEEERRRV…ERQLNDCRRN (102 aa)) are 4 X approximate tandem repeats.

Belongs to the poxviridae A25 protein family. Interacts (via N-terminus) with protein A26.

It localises to the virion. Functionally, structural protein that forms a matrix surrounding the mature virion (MV) through interaction with protein A26. Presence of protein A25 in the virion structurally prevents direct virus-cell fusion mechanism. The polypeptide is A-type inclusion protein A25 homolog (Camelus).